The primary structure comprises 153 residues: MPNVTIARESPLQDAVVQLIEELDRYLGDLYPAESNHLLDLQTLAKPDIRFLVARRSGTVVGCGAIAIDTEGGYGEVKRMFVQPTARGGQIGRRLLERIEDEARAAGLSALLLETGVYQATRIALYRKQGFADRGPFGPYGPDPLSLFMEKPL.

In terms of domain architecture, N-acetyltransferase spans 4–153 (VTIARESPLQ…PLSLFMEKPL (150 aa)).

Functionally, participates in the tryptophan-dependent indole-3-acetic acid production, which is a phytohormone released by A.brasilense. The protein is IAA acetyltransferase of Azospirillum brasilense.